A 487-amino-acid chain; its full sequence is Adenylosuccinate synthetase, chloroplastic (487 aa).

The N-terminal 46 residues, 1–46 (MSLSTVNHAAAAAAAAGSGKSFSAAAPAAPSVRLPRTRAPAAAAVS), are a transit peptide targeting the chloroplast. GTP-binding positions include 74–80 (GDEGKGK) and 102–104 (GHT). Aspartate 75 acts as the Proton acceptor in catalysis. Residues aspartate 75 and glycine 102 each coordinate Mg(2+). IMP contacts are provided by residues 75-78 (DEGK), 100-103 (NAGH), threonine 192, arginine 206, glutamine 286, threonine 301, and arginine 365. Histidine 103 acts as the Proton donor in catalysis. 361–367 (TTTGRPR) is a binding site for substrate. GTP is bound by residues arginine 367, 393–395 (KLD), and 476–478 (GVG).

Belongs to the adenylosuccinate synthetase family. Homodimer. It depends on Mg(2+) as a cofactor.

It localises to the plastid. Its subcellular location is the chloroplast. The catalysed reaction is IMP + L-aspartate + GTP = N(6)-(1,2-dicarboxyethyl)-AMP + GDP + phosphate + 2 H(+). It participates in purine metabolism; AMP biosynthesis via de novo pathway; AMP from IMP: step 1/2. Its function is as follows. Plays an important role in the de novo pathway and in the salvage pathway of purine nucleotide biosynthesis. Catalyzes the first committed step in the biosynthesis of AMP from IMP. This Oryza sativa subsp. indica (Rice) protein is Adenylosuccinate synthetase, chloroplastic.